The following is a 446-amino-acid chain: N-succinylarginine dihydrolase (446 aa).

Substrate-binding positions include 19 to 28 (AGLSFGNVAS), asparagine 110, and 137 to 138 (HR). Glutamate 174 is a catalytic residue. A substrate-binding site is contributed by arginine 213. Residue histidine 249 is part of the active site. Positions 251 and 364 each coordinate substrate. Cysteine 370 acts as the Nucleophile in catalysis.

This sequence belongs to the succinylarginine dihydrolase family. As to quaternary structure, homodimer.

The enzyme catalyses N(2)-succinyl-L-arginine + 2 H2O + 2 H(+) = N(2)-succinyl-L-ornithine + 2 NH4(+) + CO2. It functions in the pathway amino-acid degradation; L-arginine degradation via AST pathway; L-glutamate and succinate from L-arginine: step 2/5. Its function is as follows. Catalyzes the hydrolysis of N(2)-succinylarginine into N(2)-succinylornithine, ammonia and CO(2). The sequence is that of N-succinylarginine dihydrolase from Burkholderia thailandensis (strain ATCC 700388 / DSM 13276 / CCUG 48851 / CIP 106301 / E264).